The chain runs to 1052 residues: Membrane-bound transcription factor site-1 protease (1052 aa).

Positions 1-17 are cleaved as a signal peptide; that stretch reads MKLINIWLLLLVVLLCG. Residues 18–186 constitute a propeptide that is removed on maturation; it reads KKHLGDRLGK…TGRHSSRRLL (169 aa). The N-linked (GlcNAc...) asparagine glycan is linked to asparagine 148. Residue serine 168 is modified to Phosphoserine. The Lumenal portion of the chain corresponds to 187 to 999; it reads RAIPRQVAQT…MPGRYNQEVG (813 aa). One can recognise a Peptidase S8 domain in the interval 190-472; the sequence is PRQVAQTLQA…HGKLDLLRAY (283 aa). Aspartate 218 (charge relay system) is an active-site residue. Asparagine 236 carries N-linked (GlcNAc...) asparagine glycosylation. Histidine 249 serves as the catalytic Charge relay system. A glycan (N-linked (GlcNAc...) asparagine) is linked at asparagine 305. Catalysis depends on serine 414, which acts as the Charge relay system. 2 N-linked (GlcNAc...) asparagine glycosylation sites follow: asparagine 515 and asparagine 728. Residues 877–887 show a composition bias toward polar residues; that stretch reads PSLSHSGNRQR. Residues 877-900 form a disordered region; that stretch reads PSLSHSGNRQRPPSGAGLAPPERM. An N-linked (GlcNAc...) asparagine glycan is attached at asparagine 939. Residues 1000-1022 form a helical membrane-spanning segment; the sequence is QTIPVFAFLGAMVALAFFVVQIS. Over 1023–1052 the chain is Cytoplasmic; sequence KAKSRPKRRRPRAKRPQLTQQTHPPRTPSV. Basic residues predominate over residues 1025–1037; the sequence is KSRPKRRRPRAKR. Residues 1025–1052 form a disordered region; it reads KSRPKRRRPRAKRPQLTQQTHPPRTPSV.

This sequence belongs to the peptidase S8 family. The cofactor is Ca(2+). In terms of processing, the 148 kDa zymogen is processed progressively into two membrane-bound 120 and 106 kDa forms in the endoplasmic reticulum, and late into a secreted 98 kDa form. The propeptide is autocatalytically removed through an intramolecular cleavage after Leu-186. Further cleavage generates 14, 10, and 8 kDa intermediates.

It localises to the endoplasmic reticulum membrane. The protein localises to the golgi apparatus membrane. The enzyme catalyses Processes precursors containing basic and hydrophobic/aliphatic residues at P4 and P2, respectively, with a relatively relaxed acceptance of amino acids at P1 and P3.. Inhibited by divalent copper and zinc ions, but not by nickel or cobalt. Inhibited by its prosegment, but not smaller fragments. Inhibited by 4-(2-aminoethyl)benzenesulfonyl fluoride (AEBSF), a serine protease inhibitor. Serine protease that cleaves after hydrophobic or small residues, provided that Arg or Lys is in position P4: known substrates include SREBF1/SREBP1, SREBF2/SREBP2, BDNF, GNPTAB, ATF6, ATF6B and FAM20C. Cleaves substrates after Arg-Ser-Val-Leu (SREBP2), Arg-His-Leu-Leu (ATF6), Arg-Gly-Leu-Thr (BDNF) and its own propeptide after Arg-Arg-Leu-Leu. Catalyzes the first step in the proteolytic activation of the sterol regulatory element-binding proteins (SREBPs) SREBF1/SREBP1 and SREBF2/SREBP2. Also mediates the first step in the proteolytic activation of the cyclic AMP-dependent transcription factor ATF-6 (ATF6 and ATF6B). Mediates the protein cleavage of GNPTAB into subunit alpha and beta, thereby participating in biogenesis of lysosomes. Cleaves the propeptide from FAM20C which is required for FAM20C secretion from the Golgi apparatus membrane and for enhancement of FAM20C kinase activity, promoting osteoblast differentiation and biomineralization. Involved in the regulation of M6P-dependent Golgi-to-lysosome trafficking of lysosomal enzymes. It is required for the activation of CREB3L2/BBF2H7, a transcriptional activator of MIA3/TANGO and other genes controlling mega vesicle formation. Therefore, it plays a key role in the regulation of mega vesicle-mediated collagen trafficking. In astrocytes and osteoblasts, upon DNA damage and ER stress, mediates the first step of the regulated intramembrane proteolytic activation of the transcription factor CREB3L1, leading to the inhibition of cell-cycle progression. This is Membrane-bound transcription factor site-1 protease from Cricetulus griseus (Chinese hamster).